A 402-amino-acid polypeptide reads, in one-letter code: Cytochrome b561 and DOMON domain-containing protein At4g17280 (402 aa).

The signal sequence occupies residues 1–31 (MSNHMSIMKFLNQILCLSLILSISMTTLSFA). The 118-residue stretch at 54–171 (LDSFLHYTYE…GTINTVWQDG (118 aa)) folds into the DOMON domain. The 197-residue stretch at 183-379 (TSGNNVRSVS…LEAFTWYVVI (197 aa)) folds into the Cytochrome b561 domain. Transmembrane regions (helical) follow at residues 218–238 (IHGI…AIIA) and 250–270 (AWFY…VAGW). Positions 219, 255, and 288 each coordinate heme b. Residues 290–310 (AIGIALFSLATVQVFAMFLRP) traverse the membrane as a helical segment. Position 324 (His324) interacts with heme b. The next 2 membrane-spanning stretches (helical) occupy residues 326-346 (TIGY…LGIL) and 359-379 (IIVV…YVVI).

Heme b serves as cofactor.

The protein localises to the membrane. May act as a catecholamine-responsive trans-membrane electron transporter. In Arabidopsis thaliana (Mouse-ear cress), this protein is Cytochrome b561 and DOMON domain-containing protein At4g17280.